The sequence spans 323 residues: tRNA U34 carboxymethyltransferase (323 aa).

Carboxy-S-adenosyl-L-methionine-binding positions include Lys-91, Trp-105, Lys-110, Gly-130, Asp-152–Thr-154, Ile-181–Glu-182, Met-196, Tyr-200, and Arg-315.

This sequence belongs to the class I-like SAM-binding methyltransferase superfamily. CmoB family. As to quaternary structure, homotetramer.

It carries out the reaction carboxy-S-adenosyl-L-methionine + 5-hydroxyuridine(34) in tRNA = 5-carboxymethoxyuridine(34) in tRNA + S-adenosyl-L-homocysteine + H(+). Its function is as follows. Catalyzes carboxymethyl transfer from carboxy-S-adenosyl-L-methionine (Cx-SAM) to 5-hydroxyuridine (ho5U) to form 5-carboxymethoxyuridine (cmo5U) at position 34 in tRNAs. This is tRNA U34 carboxymethyltransferase from Escherichia coli O7:K1 (strain IAI39 / ExPEC).